Reading from the N-terminus, the 247-residue chain is ATP synthase subunit a, chloroplastic (247 aa).

Helical transmembrane passes span Gln38–Val58, Val95–Leu115, Ile134–Ser154, Leu199–Leu219, and Gly220–Gly240.

This sequence belongs to the ATPase A chain family. In terms of assembly, F-type ATPases have 2 components, CF(1) - the catalytic core - and CF(0) - the membrane proton channel. CF(1) has five subunits: alpha(3), beta(3), gamma(1), delta(1), epsilon(1). CF(0) has four main subunits: a, b, b' and c.

The protein resides in the plastid. It localises to the chloroplast thylakoid membrane. In terms of biological role, key component of the proton channel; it plays a direct role in the translocation of protons across the membrane. In Populus alba (White poplar), this protein is ATP synthase subunit a, chloroplastic.